The sequence spans 192 residues: Glycerol-3-phosphate acyltransferase (192 aa).

The next 5 membrane-spanning stretches (helical) occupy residues 4-24, 54-74, 80-100, 112-132, and 154-174; these read MFWL…AILL, LAIL…LIAS, IAQQ…PVYF, AGVL…AWLL, and LLAW…LLIV.

This sequence belongs to the PlsY family. As to quaternary structure, probably interacts with PlsX.

The protein resides in the cell inner membrane. It catalyses the reaction an acyl phosphate + sn-glycerol 3-phosphate = a 1-acyl-sn-glycero-3-phosphate + phosphate. It participates in lipid metabolism; phospholipid metabolism. Functionally, catalyzes the transfer of an acyl group from acyl-phosphate (acyl-PO(4)) to glycerol-3-phosphate (G3P) to form lysophosphatidic acid (LPA). This enzyme utilizes acyl-phosphate as fatty acyl donor, but not acyl-CoA or acyl-ACP. The protein is Glycerol-3-phosphate acyltransferase of Pseudomonas savastanoi pv. phaseolicola (strain 1448A / Race 6) (Pseudomonas syringae pv. phaseolicola (strain 1448A / Race 6)).